Here is a 510-residue protein sequence, read N- to C-terminus: Chromosomal replication initiator protein DnaA (510 aa).

The segment at 1-107 is domain I, interacts with DnaA modulators; sequence MTNDPGSGFA…VRIAPPPADD (107 aa). The interval 107–169 is domain II; it reads DDDDSVAAAV…ADTSASAGGT (63 aa). The tract at residues 119–168 is disordered; the sequence is PGLEASPETSQEVSDEIDDFGENAPNSRQSWPTHFKKRSTDADTSASAGG. Positions 170 to 386 are domain III, AAA+ region; that stretch reads SLNRRYTFDT…GALIRVTAFA (217 aa). Positions 214, 216, 217, and 218 each coordinate ATP. The interval 387 to 510 is domain IV, binds dsDNA; the sequence is SLNKTPIDKA…TTRIRQRSKR (124 aa).

Belongs to the DnaA family. As to quaternary structure, oligomerizes as a right-handed, spiral filament on DNA at oriC.

Its subcellular location is the cytoplasm. Plays an essential role in the initiation and regulation of chromosomal replication. ATP-DnaA binds to the origin of replication (oriC) to initiate formation of the DNA replication initiation complex once per cell cycle. Binds the DnaA box (a 9 base pair repeat at the origin) and separates the double-stranded (ds)DNA. Forms a right-handed helical filament on oriC DNA; dsDNA binds to the exterior of the filament while single-stranded (ss)DNA is stabiized in the filament's interior. The ATP-DnaA-oriC complex binds and stabilizes one strand of the AT-rich DNA unwinding element (DUE), permitting loading of DNA polymerase. After initiation quickly degrades to an ADP-DnaA complex that is not apt for DNA replication. Binds acidic phospholipids. This Mycobacterium marinum (strain ATCC BAA-535 / M) protein is Chromosomal replication initiator protein DnaA.